Reading from the N-terminus, the 2594-residue chain is Immunoglobulin superfamily member 10 (2594 aa).

Positions methionine 1–glycine 25 are cleaved as a signal peptide. The LRRNT domain occupies cysteine 29 to proline 56. LRR repeat units follow at residues asparagine 58–glycine 79, arginine 82–glycine 103, serine 106–glycine 127, serine 130–glycine 151, leucine 154–serine 175, and phenylalanine 186–serine 207. Residues asparagine 219 to lysine 281 form the LRRCT domain. Residue asparagine 439 is glycosylated (N-linked (GlcNAc...) asparagine). Ig-like C2-type domains lie at proline 461–threonine 567 and proline 571–serine 661. 2 disulfides stabilise this stretch: cysteine 497-cysteine 551 and cysteine 595-cysteine 645. N-linked (GlcNAc...) asparagine glycosylation is present at asparagine 627. Over residues isoleucine 670 to lysine 685 the composition is skewed to basic and acidic residues. Disordered regions lie at residues isoleucine 670–threonine 725 and valine 963–arginine 1008. Positions isoleucine 715–threonine 725 are enriched in basic residues. The segment covering threonine 972–aspartate 984 has biased composition (basic and acidic residues). A compositionally biased stretch (polar residues) spans serine 985–asparagine 1003. N-linked (GlcNAc...) asparagine glycosylation is present at asparagine 1044. 3 disordered regions span residues threonine 1228 to threonine 1251, valine 1333 to threonine 1364, and serine 1428 to proline 1457. Basic and acidic residues predominate over residues valine 1333–threonine 1342. The segment covering threonine 1355 to threonine 1364 has biased composition (polar residues). Ig-like C2-type domains follow at residues proline 1619–serine 1710, proline 1715–glutamine 1807, proline 1812–valine 1901, proline 1912–arginine 2005, proline 2008–threonine 2106, proline 2112–aspartate 2200, proline 2205–leucine 2302, proline 2308–glutamate 2398, proline 2403–threonine 2493, and proline 2499–glutamine 2592. Cystine bridges form between cysteine 1641/cysteine 1694, cysteine 1738/cysteine 1791, and cysteine 1835/cysteine 1888. The stretch at serine 1658–isoleucine 1681 is one LRR 11 repeat. 4 N-linked (GlcNAc...) asparagine glycosylation sites follow: asparagine 1676, asparagine 1780, asparagine 1870, and asparagine 1933. Intrachain disulfides connect cysteine 1934-cysteine 1987, cysteine 2031-cysteine 2090, cysteine 2134-cysteine 2184, cysteine 2232-cysteine 2284, cysteine 2330-cysteine 2382, cysteine 2425-cysteine 2477, and cysteine 2521-cysteine 2576. N-linked (GlcNAc...) asparagine glycosylation is present at asparagine 2072. Residue asparagine 2364 is glycosylated (N-linked (GlcNAc...) asparagine). Residue tyrosine 2574 is modified to Phosphotyrosine.

In terms of tissue distribution, in the embryo, expressed in the nasal mesenchyme.

The protein resides in the secreted. Its function is as follows. Involved in the control of early migration of neurons expressing gonadotropin-releasing hormone (GNRH neurons). May be involved in the maintenance of osteochondroprogenitor cells pool. This Mus musculus (Mouse) protein is Immunoglobulin superfamily member 10 (Igsf10).